The chain runs to 85 residues: ATP synthase subunit c (85 aa).

A run of 2 helical transmembrane segments spans residues 1–21 (MLAWVIIASIITAGFSVALVG) and 53–73 (LLFALAFIETIMIFTLTVALI).

The protein belongs to the ATPase C chain family. As to quaternary structure, F-type ATPases have 2 components, F(1) - the catalytic core - and F(0) - the membrane proton channel. F(1) has five subunits: alpha(3), beta(3), gamma(1), delta(1), epsilon(1). F(0) has three main subunits: a(1), b(2) and c(10-14). The alpha and beta chains form an alternating ring which encloses part of the gamma chain. F(1) is attached to F(0) by a central stalk formed by the gamma and epsilon chains, while a peripheral stalk is formed by the delta and b chains.

It localises to the cell inner membrane. In terms of biological role, f(1)F(0) ATP synthase produces ATP from ADP in the presence of a proton or sodium gradient. F-type ATPases consist of two structural domains, F(1) containing the extramembraneous catalytic core and F(0) containing the membrane proton channel, linked together by a central stalk and a peripheral stalk. During catalysis, ATP synthesis in the catalytic domain of F(1) is coupled via a rotary mechanism of the central stalk subunits to proton translocation. Its function is as follows. Key component of the F(0) channel; it plays a direct role in translocation across the membrane. A homomeric c-ring of between 10-14 subunits forms the central stalk rotor element with the F(1) delta and epsilon subunits. In Dictyoglomus turgidum (strain DSM 6724 / Z-1310), this protein is ATP synthase subunit c.